The following is a 513-amino-acid chain: Histidine ammonia-lyase (513 aa).

The 5-imidazolinone (Ala-Gly) cross-link spans 144–146 (ASG). Residue S145 is modified to 2,3-didehydroalanine (Ser).

The protein belongs to the PAL/histidase family. Contains an active site 4-methylidene-imidazol-5-one (MIO), which is formed autocatalytically by cyclization and dehydration of residues Ala-Ser-Gly.

The protein resides in the cytoplasm. It catalyses the reaction L-histidine = trans-urocanate + NH4(+). It functions in the pathway amino-acid degradation; L-histidine degradation into L-glutamate; N-formimidoyl-L-glutamate from L-histidine: step 1/3. This chain is Histidine ammonia-lyase, found in Streptococcus pyogenes serotype M49 (strain NZ131).